The sequence spans 46 residues: uncharacterized protein (46 aa).

The protein localises to the mitochondrion. This is an uncharacterized protein from Saccharomyces cerevisiae (strain ATCC 204508 / S288c) (Baker's yeast).